Reading from the N-terminus, the 539-residue chain is Chaperonin GroEL (539 aa).

Residues 29–32, 86–90, Gly413, 477–479, and Asp493 contribute to the ATP site; these read TLGP, DGTTT, and DAL.

The protein belongs to the chaperonin (HSP60) family. As to quaternary structure, forms a cylinder of 14 subunits composed of two heptameric rings stacked back-to-back. Interacts with the co-chaperonin GroES.

Its subcellular location is the cytoplasm. The enzyme catalyses ATP + H2O + a folded polypeptide = ADP + phosphate + an unfolded polypeptide.. In terms of biological role, together with its co-chaperonin GroES, plays an essential role in assisting protein folding. The GroEL-GroES system forms a nano-cage that allows encapsulation of the non-native substrate proteins and provides a physical environment optimized to promote and accelerate protein folding. In Clostridium perfringens (strain 13 / Type A), this protein is Chaperonin GroEL.